The primary structure comprises 56 residues: Large ribosomal subunit protein bL32c (56 aa).

It belongs to the bacterial ribosomal protein bL32 family.

It localises to the plastid. The protein resides in the chloroplast. In Platanus occidentalis (Sycamore), this protein is Large ribosomal subunit protein bL32c.